Consider the following 392-residue polypeptide: S-adenosylmethionine synthase (392 aa).

His17 contacts ATP. Asp19 provides a ligand contact to Mg(2+). Residue Glu45 coordinates K(+). Residues Glu58 and Gln102 each coordinate L-methionine. The flexible loop stretch occupies residues 102–112; that stretch reads QSADIAQGVDA. Residues 169 to 171, 235 to 236, Asp244, 250 to 251, Ala267, and Lys271 contribute to the ATP site; these read DAK, KF, and RK. Residue Asp244 coordinates L-methionine. Lys275 serves as a coordination point for L-methionine.

The protein belongs to the AdoMet synthase family. In terms of assembly, homotetramer; dimer of dimers. The cofactor is Mg(2+). It depends on K(+) as a cofactor.

It is found in the cytoplasm. It carries out the reaction L-methionine + ATP + H2O = S-adenosyl-L-methionine + phosphate + diphosphate. It functions in the pathway amino-acid biosynthesis; S-adenosyl-L-methionine biosynthesis; S-adenosyl-L-methionine from L-methionine: step 1/1. In terms of biological role, catalyzes the formation of S-adenosylmethionine (AdoMet) from methionine and ATP. The overall synthetic reaction is composed of two sequential steps, AdoMet formation and the subsequent tripolyphosphate hydrolysis which occurs prior to release of AdoMet from the enzyme. This chain is S-adenosylmethionine synthase, found in Methylobacterium radiotolerans (strain ATCC 27329 / DSM 1819 / JCM 2831 / NBRC 15690 / NCIMB 10815 / 0-1).